Here is a 68-residue protein sequence, read N- to C-terminus: Conotoxin Em11.5 (68 aa).

The N-terminal stretch at 1-26 (MMFRLTSVGCFLLVIACLNLFQVVLT) is a signal peptide. Intrachain disulfides connect cysteine 29/cysteine 43, cysteine 36/cysteine 48, cysteine 42/cysteine 52, and cysteine 47/cysteine 56. Phenylalanine amide is present on phenylalanine 60. Positions 64 to 68 (ATFQE) are excised as a propeptide.

This sequence belongs to the conotoxin I2 superfamily. As to expression, expressed by the venom duct.

The protein resides in the secreted. The chain is Conotoxin Em11.5 from Conus emaciatus (False virgin cone).